The sequence spans 328 residues: Protein MGF 300-4L (328 aa).

This sequence belongs to the asfivirus MGF 300 family.

The sequence is that of Protein MGF 300-4L from Ornithodoros (relapsing fever ticks).